The following is a 237-amino-acid chain: Phosphoribosylaminoimidazole-succinocarboxamide synthase (237 aa).

This sequence belongs to the SAICAR synthetase family.

The catalysed reaction is 5-amino-1-(5-phospho-D-ribosyl)imidazole-4-carboxylate + L-aspartate + ATP = (2S)-2-[5-amino-1-(5-phospho-beta-D-ribosyl)imidazole-4-carboxamido]succinate + ADP + phosphate + 2 H(+). Its pathway is purine metabolism; IMP biosynthesis via de novo pathway; 5-amino-1-(5-phospho-D-ribosyl)imidazole-4-carboxamide from 5-amino-1-(5-phospho-D-ribosyl)imidazole-4-carboxylate: step 1/2. In Listeria welshimeri serovar 6b (strain ATCC 35897 / DSM 20650 / CCUG 15529 / CIP 8149 / NCTC 11857 / SLCC 5334 / V8), this protein is Phosphoribosylaminoimidazole-succinocarboxamide synthase.